The following is a 649-amino-acid chain: Protein teflon (649 aa).

The segment at 33 to 56 adopts a C2H2-type 1 zinc-finger fold; sequence LYCHFCRDLFTQLPEFLRHLQSNH. The tract at residues 78–126 is disordered; that stretch reads EQGKAHEDAQSAGHNSSSGDSSSLMNSEDSRAIEGSEDNSDNSPMKPEQ. A compositionally biased stretch (low complexity) spans 88–104; that stretch reads SAGHNSSSGDSSSLMNS. 2 consecutive C2H2-type zinc fingers follow at residues 599–621 and 625–648; these read YFCK…LISH and FQCT…RNAH.

Belongs to the Teflon family. In terms of tissue distribution, expressed at a low level in a variety of tissues, highest expression is in testis.

The protein resides in the nucleus. It is found in the chromosome. Specifically required in males for proper segregation of autosomal bivalents at meiosis I. Expression is required in the male germ line prior to spermatocyte stage S4. May have a role as a bridging molecule maintaining adhesion to hold autosome bivalents together via heterochromatic connections. This is Protein teflon from Drosophila melanogaster (Fruit fly).